A 498-amino-acid polypeptide reads, in one-letter code: Cytotardin (498 aa).

Positions 18–58 (DRVHSKDELQALNTRLAKYIDKIRNLENENVALQRQLQTAE) are coil 1A. Residues 22–378 (SKDELQALNT…KLLSGEEQRL (357 aa)) enclose the IF rod domain. The segment at 59–69 (QTTVTEIHRVS) is linker 1. The tract at residues 70–213 (KNYDEELAKL…ENLREEKSQR (144 aa)) is coil 1B. A linker 2 region spans residues 214–231 (QYLLHDLQRGLQDEFESK). The segment at 232 to 371 (LVQQLNELRA…AELATYNKLL (140 aa)) is coil 2. Positions 381–425 (DGSGTVIRRPTGGATGTGSGIYGGTGSGGYSRDIGSTTTTKTTYT) are disordered. Residues 393 to 409 (GATGTGSGIYGGTGSGG) show a composition bias toward gly residues.

Belongs to the intermediate filament family.

It is found in the cytoplasm. The protein resides in the cell cortex. Intermediate filament (IF) protein that forms both short filaments and extensive cytoskeletal networks which most likely are homomeric. Some of the cytotardin arrays display cage-like perinuclear structures, while others are located in the periphery close to the cell membrane. The entire tardigrade body is ensheathed by a grid of belt-like filaments formed by the cytotardin protein, which retain their integrity even in contracted specimens. The belt-like structures encircling each epidermal cell might help to resist the shearing forces that arise during freezing and thawing cycles, whereas the dense meshwork at the basis of each claw and around the stylets might provide the tissue stability necessary for locomotion and feeding. This chain is Cytotardin, found in Hypsibius exemplaris (Freshwater tardigrade).